The sequence spans 227 residues: Cytidylate kinase (227 aa).

12 to 20 (GPSGAGKGT) provides a ligand contact to ATP.

Belongs to the cytidylate kinase family. Type 1 subfamily.

It is found in the cytoplasm. The enzyme catalyses CMP + ATP = CDP + ADP. It carries out the reaction dCMP + ATP = dCDP + ADP. In Salmonella typhimurium (strain LT2 / SGSC1412 / ATCC 700720), this protein is Cytidylate kinase.